The sequence spans 488 residues: MPAEILSELPLRPAPRDIKIPNAMHNEERRHKHSRSSYSEMSPLMSRNNSLTWRPAKRPMPTPDKTIAVINAAGRQAASFIRVATAVGFHVRAQMRNLEGVVATEVSTNPNVTVLQGELYTKETPAESDKGQCVDVTKNGPISGIGVNDALISELFRGAQLAFINTTFYGDEERIGMALADAAKKAGVQHYVYSSMPDHHAYNKDWPSLPLWASKHRVEDYVKEIGIPATFVYTGIYNNNFTSLPYPLFCTDLQPDGSWIWQAPFHPNAKLPWLDAEHDVGPAILQIFKDGVKKWGGGKRIALAYEMLTPLEACEVFSRGVGRPVRYVRGPIEVKVKIPEGYRIQLEALEELFNLHNEDPEKQPPYFGDIELERSCPRAALELWEGPRGLEEYAREVFPLEEQANGLTWMIEEYDGGGGNNIGNNHNNHHQQEEHYQHQNGHQNGHNGINGHIVNGGVDSESEEEDSDSDDEGLVMRGNKRADEEWLA.

A disordered region spans residues 1–45; the sequence is MPAEILSELPLRPAPRDIKIPNAMHNEERRHKHSRSSYSEMSPLM. Residues 14-29 show a composition bias toward basic and acidic residues; it reads APRDIKIPNAMHNEER. A compositionally biased stretch (polar residues) spans 36 to 45; sequence SSYSEMSPLM. NADP(+) is bound by residues 71–76, asparagine 165, lysine 215, and 237–240; these read NAAGRQ and YNNN. Residues 75 to 76, 165 to 167, lysine 215, and 237 to 240 contribute to the NAD(+) site; these read RQ, NTT, and YNNN. The dispensable for NMR function stretch occupies residues 412–488; sequence EEYDGGGGNN…NKRADEEWLA (77 aa). The segment at 422-488 is disordered; that stretch reads IGNNHNNHHQ…NKRADEEWLA (67 aa). Positions 438 to 459 are enriched in low complexity; sequence HQNGHQNGHNGINGHIVNGGVD. The segment covering 460 to 473 has biased composition (acidic residues); it reads SESEEEDSDSDDEG.

The protein belongs to the NmrA-type oxidoreductase family. As to quaternary structure, interacts with nit-2.

Its subcellular location is the nucleus. Functionally, may be a redox sensor protein. Negative transcriptional regulator involved in the post-transcriptional modulation of the GATA-type transcription factor nit-2, forming part of a system controlling nitrogen metabolite repression. This Neurospora crassa (strain ATCC 24698 / 74-OR23-1A / CBS 708.71 / DSM 1257 / FGSC 987) protein is Nitrogen metabolite repression protein nmr (nmr).